Here is a 554-residue protein sequence, read N- to C-terminus: Neutral amino acid transporter 9 (554 aa).

Residues 1–112 (MDSDQTPLIN…GSDGTGKNSS (112 aa)) lie on the Cytoplasmic side of the membrane. Residues 113-133 (IVTIFMIWNTMMGTSILSIPW) form a helical membrane-spanning segment. The important for arginine binding and amino acid transport stretch occupies residues 122–127 (TMMGTS). Residue S127 participates in arginine binding. The Lumenal portion of the chain corresponds to 134-139 (GIKQAG). The chain crosses the membrane as a helical span at residues 140–160 (FTTGVCILFLMGILTLYCCYR). Over 161 to 191 (VVKSRGTIPLTDTSNWEFPDVCQYYFGSFGR) the chain is Cytoplasmic. A helical membrane pass occupies residues 192-218 (WSSLLFSLVSLIGAMIVYWVLMSNFLF). The Lumenal portion of the chain corresponds to 219-276 (NTGKFIYNYVNDVNVTDDVLSNNGSDKVICPNPDSTRPLNKSMDTYFGNGTNYEQFET). N-linked (GlcNAc...) asparagine glycans are attached at residues N232, N241, N258, and N267. The cysteines at positions 248 and 417 are disulfide-linked. A helical transmembrane segment spans residues 277-293 (WWSKTNTVPFYLVVLLL). At 294–302 (PLLSFRSPS) the chain is on the cytoplasmic side. The chain crosses the membrane as a helical span at residues 303 to 327 (FFAKFNILGTVSIIYLVSLVTLKAA). At 328 to 349 (HLGFHLRFSWNQVQEFFVPEFR) the chain is on the lumenal side. The chain crosses the membrane as a helical span at residues 350 to 370 (LSFPQLTGILTLAFFIHNCII). Residues 371 to 387 (TLLKNNRNQKNNVRDLS) lie on the Cytoplasmic side of the membrane. A helical transmembrane segment spans residues 388-408 (IAYLLVGLTYIYVGVAVFASF). Residues 409-430 (PSPPLSKQCIQQNFLDNFPSSD) lie on the Lumenal side of the membrane. A helical transmembrane segment spans residues 431–451 (ILAFVARIFLLFQMMTVYPLL). The CARC motif motif lies at 437–447 (RIFLLFQMMTV). The short motif at 450 to 456 (LLGYLVR) is the CRAC motif element. The Cytoplasmic portion of the chain corresponds to 452 to 472 (GYLVRVQLLGHIFGDIYPSVF). A helical transmembrane segment spans residues 473 to 493 (HVLALNIAVVGVGVIMARFYP). The Lumenal segment spans residues 494-500 (NIGGIIR). Residues 501–521 (FSGAACGLAFVFVYPSLIHMI) form a helical membrane-spanning segment. The Cytoplasmic segment spans residues 522–533 (SLHRRGQLKVHS). A helical membrane pass occupies residues 534–554 (ILIHVSIIVLGIANLIAQFFM).

The protein belongs to the amino acid/polyamine transporter 2 family. SLC38A9 subfamily. As to quaternary structure, associated component of the Ragulator complex. Associated component of the Rag GTPases heterodimers. Glycosylated.

It is found in the lysosome membrane. Its subcellular location is the late endosome membrane. It carries out the reaction L-leucine(in) = L-leucine(out). It catalyses the reaction L-tyrosine(in) = L-tyrosine(out). The catalysed reaction is L-glutamine(out) = L-glutamine(in). The enzyme catalyses L-asparagine(out) = L-asparagine(in). In terms of biological role, lysosomal amino acid transporter involved in the activation of mTORC1 in response to amino acid levels. Probably acts as an amino acid sensor of the Rag GTPases and Ragulator complexes, 2 complexes involved in amino acid sensing and activation of mTORC1, a signaling complex promoting cell growth in response to growth factors, energy levels, and amino acids. Following activation by amino acids, the Ragulator and Rag GTPases function as a scaffold recruiting mTORC1 to lysosomes where it is in turn activated. SLC38A9 mediates transport of amino acids with low capacity and specificity with a slight preference for polar amino acids. Acts as an arginine sensor. Following activation by arginine binding, mediates transport of L-glutamine, leucine and tyrosine with high efficiency, and is required for the efficient utilization of these amino acids after lysosomal protein degradation. However, the transport mechanism is not well defined and the role of sodium is not clear. Guanine exchange factor (GEF) that, upon arginine binding, stimulates GDP release from RRAGA and therefore activates the Rag GTPase heterodimer and the mTORC1 pathway in response to nutrient sufficiency. The protein is Neutral amino acid transporter 9 of Xenopus tropicalis (Western clawed frog).